Reading from the N-terminus, the 341-residue chain is Dihydroorotate dehydrogenase (quinone) (341 aa).

Residues 61 to 65 (AGLDK) and threonine 85 each bind FMN. Lysine 65 lines the substrate pocket. 110–114 (NRMGF) contributes to the substrate binding site. The FMN site is built by asparagine 138 and asparagine 171. Substrate is bound at residue asparagine 171. Catalysis depends on serine 174, which acts as the Nucleophile. Asparagine 176 lines the substrate pocket. Residues lysine 216 and threonine 244 each contribute to the FMN site. 245–246 (NT) is a binding site for substrate. Residues glycine 267, glycine 296, and 317–318 (YS) each bind FMN.

This sequence belongs to the dihydroorotate dehydrogenase family. Type 2 subfamily. As to quaternary structure, monomer. FMN is required as a cofactor.

The protein localises to the cell membrane. It catalyses the reaction (S)-dihydroorotate + a quinone = orotate + a quinol. It participates in pyrimidine metabolism; UMP biosynthesis via de novo pathway; orotate from (S)-dihydroorotate (quinone route): step 1/1. In terms of biological role, catalyzes the conversion of dihydroorotate to orotate with quinone as electron acceptor. The sequence is that of Dihydroorotate dehydrogenase (quinone) from Pseudomonas fluorescens (strain SBW25).